A 229-amino-acid polypeptide reads, in one-letter code: Heptaprenylglyceryl phosphate synthase (229 aa).

Lysine 12 contacts sn-glycerol 1-phosphate. Mg(2+) is bound by residues aspartate 14 and serine 40. Sn-glycerol 1-phosphate contacts are provided by residues 159-164, glycine 189, and 209-210; these read YLEYSG and GN.

It belongs to the GGGP/HepGP synthase family. Group I subfamily. As to quaternary structure, homodimer. The cofactor is Mg(2+).

It carries out the reaction sn-glycerol 1-phosphate + all-trans-heptaprenyl diphosphate = 3-heptaprenyl-sn-glycero-1-phosphate + diphosphate. It functions in the pathway membrane lipid metabolism; glycerophospholipid metabolism. In terms of biological role, prenyltransferase that catalyzes in vivo the transfer of the heptaprenyl moiety of heptaprenyl pyrophosphate (HepPP; 35 carbon atoms) to the C3 hydroxyl of sn-glycerol-1-phosphate (G1P), producing heptaprenylglyceryl phosphate (HepGP). This reaction is an ether-bond-formation step in the biosynthesis of archaea-type G1P-based membrane lipids found in Bacillales. This chain is Heptaprenylglyceryl phosphate synthase, found in Bacillus cereus (strain ZK / E33L).